Reading from the N-terminus, the 191-residue chain is Peptidyl-tRNA hydrolase (191 aa).

Tyr-17 is a tRNA binding site. The Proton acceptor role is filled by His-22. TRNA-binding residues include Tyr-68, Asn-70, and Asn-116.

The protein belongs to the PTH family. As to quaternary structure, monomer.

The protein localises to the cytoplasm. It catalyses the reaction an N-acyl-L-alpha-aminoacyl-tRNA + H2O = an N-acyl-L-amino acid + a tRNA + H(+). Hydrolyzes ribosome-free peptidyl-tRNAs (with 1 or more amino acids incorporated), which drop off the ribosome during protein synthesis, or as a result of ribosome stalling. Functionally, catalyzes the release of premature peptidyl moieties from peptidyl-tRNA molecules trapped in stalled 50S ribosomal subunits, and thus maintains levels of free tRNAs and 50S ribosomes. This chain is Peptidyl-tRNA hydrolase, found in Francisella tularensis subsp. holarctica (strain FTNF002-00 / FTA).